A 421-amino-acid chain; its full sequence is MQLLNFGLLLLPFVAGDLAPQPEPLLAGPSDVVPGQYIVTLKEGLTSAQIRDHKKWVSSVHRANLDSFAAGASGVETEGIMKHFHIHDLNMYSGGFDEKTVEDLSRNPYVKSVHPDQHVYLAKTVTQRQARWGLGYMSSKGKPVPLHSTLVDYSYDDKAGEGVWAYVLDTGINVNHVEFEGRGILGHNAIPNKPHTDEFGHGTYVAGIIAGKTYGVAKKANVVSAKAFDTGSSTYNYILETYDWIVRNITDSNRKNKAVINLSISGAKYQPFDDAVEKAFKAGITTVVAAGNDGKDAKNNTPASSPNAITVGAVRWENTRPSFSNYGKLVDIWAPGELIKSCWKGGNNATSTQSGTSAASPHVAGLVAYLMSIENLPSPSAVTARVLNLTIPNLVKDAKDSPNRVAYNGIQERKFTLPKYY.

A signal peptide spans 1–16 (MQLLNFGLLLLPFVAG). Residues 17 to 122 (DLAPQPEPLL…VHPDQHVYLA (106 aa)) constitute a propeptide that is removed on maturation. Positions 36–122 (QYIVTLKEGL…VHPDQHVYLA (87 aa)) constitute an Inhibitor I9 domain. The Peptidase S8 domain occupies 131 to 421 (RWGLGYMSSK…ERKFTLPKYY (291 aa)). Residues Asp-169 and His-201 each act as charge relay system in the active site. Residues Asn-248, Asn-261, and Asn-348 are each glycosylated (N-linked (GlcNAc...) asparagine). Ser-357 acts as the Charge relay system in catalysis. Asn-388 carries N-linked (GlcNAc...) asparagine glycosylation.

It belongs to the peptidase S8 family.

The protein localises to the secreted. In terms of biological role, secreted subtilisin-like serine protease with keratinolytic activity that contributes to pathogenicity. This chain is Subtilisin-like protease 2 (SUB2), found in Arthroderma benhamiae (strain ATCC MYA-4681 / CBS 112371) (Trichophyton mentagrophytes).